A 491-amino-acid polypeptide reads, in one-letter code: 3-octaprenyl-4-hydroxybenzoate carboxy-lyase (491 aa).

Asn-172 is a binding site for Mn(2+). Prenylated FMN-binding positions include 175 to 177 (IYR), 189 to 191 (RWL), and 194 to 195 (RG). Position 238 (Glu-238) interacts with Mn(2+). The Proton donor role is filled by Asp-287.

This sequence belongs to the UbiD family. Homohexamer. The cofactor is prenylated FMN. Requires Mn(2+) as cofactor.

Its subcellular location is the cell membrane. It carries out the reaction a 4-hydroxy-3-(all-trans-polyprenyl)benzoate + H(+) = a 2-(all-trans-polyprenyl)phenol + CO2. It functions in the pathway cofactor biosynthesis; ubiquinone biosynthesis. Catalyzes the decarboxylation of 3-octaprenyl-4-hydroxy benzoate to 2-octaprenylphenol, an intermediate step in ubiquinone biosynthesis. The protein is 3-octaprenyl-4-hydroxybenzoate carboxy-lyase of Histophilus somni (strain 129Pt) (Haemophilus somnus).